Here is a 385-residue protein sequence, read N- to C-terminus: Protein pelota homolog (385 aa).

A Glycyl lysine isopeptide (Lys-Gly) (interchain with G-Cter in SUMO2) cross-link involves residue Lys162. A phosphoserine mark is found at Ser374, Ser380, Ser381, and Ser382.

The protein belongs to the eukaryotic release factor 1 family. Pelota subfamily. Component of the Pelota-HBS1L complex, also named Dom34-Hbs1 complex, composed of PELO and HBS1L. Interacts with PINK1. Interacts with ABCE1. Interacts with CNOT4. The cofactor is a divalent metal cation. As to expression, ubiquitously expressed.

It localises to the cytoplasm. In terms of biological role, component of the Pelota-HBS1L complex, a complex that recognizes stalled ribosomes and triggers the No-Go Decay (NGD) pathway. In the Pelota-HBS1L complex, PELO recognizes ribosomes stalled at the 3' end of an mRNA and engages stalled ribosomes by destabilizing mRNA in the mRNA channel. Following mRNA extraction from stalled ribosomes by the SKI complex, the Pelota-HBS1L complex promotes recruitment of ABCE1, which drives the disassembly of stalled ribosomes, followed by degradation of damaged mRNAs as part of the NGD pathway. As part of the PINK1-regulated signaling, upon mitochondrial damage is recruited to the ribosome/mRNA-ribonucleoprotein complex associated to mitochondrial outer membrane thereby enabling the recruitment of autophagy receptors and induction of mitophagy. This chain is Protein pelota homolog, found in Homo sapiens (Human).